The chain runs to 86 residues: uncharacterized protein (86 aa).

As to expression, retina-specific.

This is an uncharacterized protein from Homo sapiens (Human).